Consider the following 64-residue polypeptide: Prokaryotic ubiquitin-like protein UBact (64 aa).

Composition is skewed to basic and acidic residues over residues 1-12 and 33-64; these read MSDLFRMEERRQ and PDVK…RSGE. The disordered stretch occupies residues 1–64; the sequence is MSDLFRMEER…ARRYRQRSGE (64 aa). Residue glutamate 64 forms an Isoglutamyl lysine isopeptide (Glu-Lys) (interchain with K-? in acceptor proteins) linkage.

This sequence belongs to the ubiquitin-like protein UBact family.

Functionally, may function as a protein modifier covalently attached to lysine residues of substrate proteins. This may serve to target the modified proteins for degradation by proteasomes. The polypeptide is Prokaryotic ubiquitin-like protein UBact (Chthonomonas calidirosea (strain DSM 23976 / ICMP 18418 / T49)).